Consider the following 144-residue polypeptide: MVIPLRNKYGILFLIAVCIMVSGCQQQKEETPFYYGTWDEGRAPGPTDGVKSATVTFTEDEVVETEVMEGRGEVQLPFMAYKVISQSTDGSIEIQYLGPYYPLKSTLKRGENGTLIWEQNGQRKTMTRIESKTGREEKDEKSKS.

The first 23 residues, 1–23 (MVIPLRNKYGILFLIAVCIMVSG), serve as a signal peptide directing secretion. The segment at 119 to 144 (QNGQRKTMTRIESKTGREEKDEKSKS) is disordered. Positions 127-144 (TRIESKTGREEKDEKSKS) are enriched in basic and acidic residues.

This is an uncharacterized protein from Bacillus subtilis (strain 168).